The following is a 205-amino-acid chain: Adenylyl-sulfate kinase (205 aa).

31-38 (GLSGAGKS) contributes to the ATP binding site. Ser105 functions as the Phosphoserine intermediate in the catalytic mechanism.

The protein belongs to the APS kinase family.

The enzyme catalyses adenosine 5'-phosphosulfate + ATP = 3'-phosphoadenylyl sulfate + ADP + H(+). It functions in the pathway sulfur metabolism; hydrogen sulfide biosynthesis; sulfite from sulfate: step 2/3. Its function is as follows. Catalyzes the synthesis of activated sulfate. This Shewanella sp. (strain ANA-3) protein is Adenylyl-sulfate kinase.